Here is a 200-residue protein sequence, read N- to C-terminus: Lipopolysaccharide core heptose(II)-phosphate phosphatase (200 aa).

The N-terminal stretch at 1 to 25 is a signal peptide; the sequence is MLAFCRSSLKSKKYFIILLALAAIA.

It belongs to the phosphoglycerate mutase family. Ais subfamily.

The protein resides in the periplasm. It functions in the pathway bacterial outer membrane biogenesis; lipopolysaccharide metabolism. Catalyzes the dephosphorylation of heptose(II) of the outer membrane lipopolysaccharide core. This chain is Lipopolysaccharide core heptose(II)-phosphate phosphatase, found in Escherichia coli O17:K52:H18 (strain UMN026 / ExPEC).